The sequence spans 515 residues: MEHLHRKQITNTFTETFPGDLSMNNTTRQTPGVLYCSVLPTPVHHPQLLAWSADVAEMLGLESPVPEDVLILGGNTVNPTMKPYASCYAGHQFGNWAGQLGDGRAISLGFCSGKDSMEYELQLKGAGPTPYSRNSDGRAVLRSSLREYLMSEAMHYLGVPTTRALSLVSTGDAVLRDMFYNGHAAYEPGAVVLRVAPSFIRFGNFEILAERNNRDLSQQLCDWVITRYYPEIRGEDRVVQLFQAVAERTADMVVQWLRVGFVHGVMNTDNMSILGVTIDYGPYSFVDEYDARFTPNTTDLPGRRYAFGNQAAVAYWNLGRLANALAFLVPETDKLVAVLKNYQDVYETKYYTMMANKLGFDALREDDRLLIDSFEEMLRTVKPDMTMFYQLLIDLPADPGTAADVKQFFQSCFYTEADEALLHTCIAAYSKRIKTNTCSKEVSAEKMRAANPRFVLRNYILHEAIEKLEKGDDALLKKLEEYIKQPYSKNADEYFIKRPDWAAQKAGCSMLSCSS.

The ATP site is built by G101, G103, R104, K124, D136, G137, R194, and R201. The Proton acceptor role is filled by D269. Mg(2+) is bound by residues N270 and D279. D279 is an ATP binding site.

It belongs to the SELO family. Mg(2+) is required as a cofactor. Requires Mn(2+) as cofactor.

The enzyme catalyses L-seryl-[protein] + ATP = 3-O-(5'-adenylyl)-L-seryl-[protein] + diphosphate. It carries out the reaction L-threonyl-[protein] + ATP = 3-O-(5'-adenylyl)-L-threonyl-[protein] + diphosphate. It catalyses the reaction L-tyrosyl-[protein] + ATP = O-(5'-adenylyl)-L-tyrosyl-[protein] + diphosphate. The catalysed reaction is L-histidyl-[protein] + UTP = N(tele)-(5'-uridylyl)-L-histidyl-[protein] + diphosphate. The enzyme catalyses L-seryl-[protein] + UTP = O-(5'-uridylyl)-L-seryl-[protein] + diphosphate. It carries out the reaction L-tyrosyl-[protein] + UTP = O-(5'-uridylyl)-L-tyrosyl-[protein] + diphosphate. Its function is as follows. Nucleotidyltransferase involved in the post-translational modification of proteins. It can catalyze the addition of adenosine monophosphate (AMP) or uridine monophosphate (UMP) to a protein, resulting in modifications known as AMPylation and UMPylation. In Cytophaga hutchinsonii (strain ATCC 33406 / DSM 1761 / CIP 103989 / NBRC 15051 / NCIMB 9469 / D465), this protein is Protein nucleotidyltransferase YdiU.